The following is a 615-amino-acid chain: Mitogen-activated protein kinase 18 (615 aa).

A Protein kinase domain is found at 25 to 316; it reads YRILEVIGKG…PAEALADPYF (292 aa). Residues 31 to 39 and Lys-54 each bind ATP; that span reads IGKGSYGVV. The active-site Proton acceptor is Asp-151. Position 187 is a phosphothreonine (Thr-187). The TXY motif lies at 187-189; sequence TDY. Position 189 is a phosphotyrosine (Tyr-189). Residue Thr-192 is modified to Phosphothreonine. 2 disordered regions span residues 414–483 and 510–544; these read RSTV…ESSV and NTMT…PPAA. The span at 415–426 shows a compositional bias: low complexity; sequence STVHSTVVHSTS. Over residues 445-459 the composition is skewed to polar residues; that stretch reads NGASSAGHPSTSAYP. Over residues 464 to 473 the composition is skewed to pro residues; the sequence is GPPPRVPPSG. Polar residues-rich tracts occupy residues 510-522 and 532-544; these read NTMT…NIEA and PVHQ…PPAA.

This sequence belongs to the protein kinase superfamily. CMGC Ser/Thr protein kinase family. MAP kinase subfamily. In terms of assembly, interacts with PHS1. Binds to MAPKKK20. In terms of processing, dually phosphorylated on Thr-187 and Tyr-189, which activates the enzyme. Phosphorylated by MAPKKK20. Expressed in roots, seedlings, leaves, flower buds, flowers and siliques.

It localises to the nucleus. It is found in the cytoplasm. The enzyme catalyses L-seryl-[protein] + ATP = O-phospho-L-seryl-[protein] + ADP + H(+). The catalysed reaction is L-threonyl-[protein] + ATP = O-phospho-L-threonyl-[protein] + ADP + H(+). Its activity is regulated as follows. Activated by threonine and tyrosine phosphorylation. Inactivated by phosphatase PHS1. Its function is as follows. Mitogen-activated protein kinase (MAPK) that is specifically regulated by PHS1 and MAPKKK20 and mediates signaling that regulates cortical microtubule functions, maybe through regulation of microtubule dynamic instability. The sequence is that of Mitogen-activated protein kinase 18 from Arabidopsis thaliana (Mouse-ear cress).